A 383-amino-acid polypeptide reads, in one-letter code: RNA-binding motif, single-stranded-interacting protein 2 (383 aa).

An N-acetylmethionine modification is found at Met-1. The disordered stretch occupies residues 28 to 56 (QMAPPSPRNSTPNSSGGGGGGSGGNDQLS). A compositionally biased stretch (gly residues) spans 42-51 (SGGGGGGSGG). RRM domains follow at residues 58–131 (TNLY…MAKQ) and 137–222 (TNLY…FADG). Phosphoserine is present on Ser-108. Ser-287 bears the Phosphoserine mark. The segment at 352-383 (SSVSAEESNGQQNQLAVEPPSDHGVYPFQFSK) is disordered.

The protein localises to the nucleus. The polypeptide is RNA-binding motif, single-stranded-interacting protein 2 (Rbms2) (Mus musculus (Mouse)).